Reading from the N-terminus, the 29-residue chain is Cytochrome b6-f complex subunit 8 (29 aa).

The helical transmembrane segment at 3–23 (IVSIAWAALMVVFSFSLSLVV) threads the bilayer.

The protein belongs to the PetN family. In terms of assembly, the 4 large subunits of the cytochrome b6-f complex are cytochrome b6, subunit IV (17 kDa polypeptide, PetD), cytochrome f and the Rieske protein, while the 4 small subunits are PetG, PetL, PetM and PetN. The complex functions as a dimer.

Its subcellular location is the plastid. The protein resides in the chloroplast thylakoid membrane. Functionally, component of the cytochrome b6-f complex, which mediates electron transfer between photosystem II (PSII) and photosystem I (PSI), cyclic electron flow around PSI, and state transitions. This chain is Cytochrome b6-f complex subunit 8, found in Phaseolus vulgaris (Kidney bean).